The sequence spans 73 residues: Putative membrane protein insertion efficiency factor (73 aa).

It belongs to the UPF0161 family.

Its subcellular location is the cell inner membrane. Functionally, could be involved in insertion of integral membrane proteins into the membrane. This chain is Putative membrane protein insertion efficiency factor, found in Treponema denticola (strain ATCC 35405 / DSM 14222 / CIP 103919 / JCM 8153 / KCTC 15104).